The sequence spans 542 residues: Phosphoacetylglucosamine mutase 2 (542 aa).

Catalysis depends on S77, which acts as the Phosphoserine intermediate. S77 lines the Mg(2+) pocket. Phosphoserine is present on residues S77 and S82. Mg(2+) is bound by residues D292, D294, and D296. Substrate contacts are provided by residues 385–387, 510–514, and R519; these read EAN and RSSGT.

It belongs to the phosphohexose mutase family. Requires Mg(2+) as cofactor.

The protein resides in the cytoplasm. Its subcellular location is the nucleus. The catalysed reaction is N-acetyl-alpha-D-glucosamine 1-phosphate = N-acetyl-D-glucosamine 6-phosphate. It participates in nucleotide-sugar biosynthesis; UDP-N-acetyl-alpha-D-glucosamine biosynthesis; N-acetyl-alpha-D-glucosamine 1-phosphate from alpha-D-glucosamine 6-phosphate (route I): step 2/2. Functionally, catalyzes the conversion of GlcNAc-6-P into GlcNAc-1-P during the synthesis of uridine diphosphate/UDP-GlcNAc, which is a biosynthetic precursor of chitin and also supplies the amino sugars for N-linked oligosaccharides of glycoproteins. The sequence is that of Phosphoacetylglucosamine mutase 2 from Schizosaccharomyces pombe (strain 972 / ATCC 24843) (Fission yeast).